The following is a 126-amino-acid chain: 14 kDa phosphohistidine phosphatase (126 aa).

Position 22 (Lys-22) interacts with substrate. Residue His-54 is the Proton acceptor of the active site. Residue Ser-95–Gly-97 participates in substrate binding.

It belongs to the janus family. As to quaternary structure, monomer.

It is found in the cytoplasm. It carries out the reaction N(pros)-phospho-L-histidyl-[protein] + H2O = L-histidyl-[protein] + phosphate. It catalyses the reaction N(tele)-phospho-L-histidyl-[protein] + H2O = L-histidyl-[protein] + phosphate. In terms of biological role, exhibits phosphohistidine phosphatase activity. This Sus scrofa (Pig) protein is 14 kDa phosphohistidine phosphatase (PHPT1).